The chain runs to 133 residues: Interferon alpha-inducible protein 27-like protein 2 (133 aa).

Transmembrane regions (helical) follow at residues 8–28 (AAIG…AVGF), 51–71 (GGGV…AAGL), and 73–93 (TSSN…LGGA). Residues 93–133 (AKRASPSPPPGGPRPEGEQPGENVPQVEPPKSPLGPEKHEK) are disordered.

It belongs to the IFI6/IFI27 family.

The protein resides in the mitochondrion membrane. In terms of biological role, plays a role in the apoptotic process and has a pro-apoptotic activity. This is Interferon alpha-inducible protein 27-like protein 2 from Bos taurus (Bovine).